We begin with the raw amino-acid sequence, 244 residues long: 14-3-3 protein beta/alpha (244 aa).

Methionine 1 is modified (N-acetylmethionine). A Phosphoserine modification is found at serine 184.

Belongs to the 14-3-3 family. Homodimer, and heterodimer with other family members. In terms of processing, phosphorylated.

It is found in the cytoplasm. Its function is as follows. Adapter protein implicated in the regulation of a large spectrum of both general and specialized signaling pathways. Binds to a large number of partners, usually by recognition of a phosphoserine or phosphothreonine motif. Binding generally results in the modulation of the activity of the binding partner. The chain is 14-3-3 protein beta/alpha (YWHAB) from Gallus gallus (Chicken).